Here is a 119-residue protein sequence, read N- to C-terminus: Nascent polypeptide-associated complex protein (119 aa).

Positions 5–73 (RMNSREMRRL…FRETPKKQEG (69 aa)) constitute an NAC-A/B domain.

This sequence belongs to the NAC-alpha family. As to quaternary structure, homodimer. Interacts with the ribosome. Binds ribosomal RNA.

In terms of biological role, contacts the emerging nascent chain on the ribosome. In Thermoplasma volcanium (strain ATCC 51530 / DSM 4299 / JCM 9571 / NBRC 15438 / GSS1), this protein is Nascent polypeptide-associated complex protein.